A 484-amino-acid chain; its full sequence is tRNA sulfurtransferase (484 aa).

The 105-residue stretch at 63-167 (ANLILLLSST…NEKLFFIDKK (105 aa)) folds into the THUMP domain. ATP-binding positions include 185-186 (LI), K267, G289, and Q298. A disulfide bond links C346 and C458. One can recognise a Rhodanese domain in the interval 406 to 484 (FAENEIVLDI…GFDNVKVYRP (79 aa)). C458 acts as the Cysteine persulfide intermediate in catalysis.

The protein belongs to the ThiI family.

The protein localises to the cytoplasm. It catalyses the reaction [ThiI sulfur-carrier protein]-S-sulfanyl-L-cysteine + a uridine in tRNA + 2 reduced [2Fe-2S]-[ferredoxin] + ATP + H(+) = [ThiI sulfur-carrier protein]-L-cysteine + a 4-thiouridine in tRNA + 2 oxidized [2Fe-2S]-[ferredoxin] + AMP + diphosphate. The enzyme catalyses [ThiS sulfur-carrier protein]-C-terminal Gly-Gly-AMP + S-sulfanyl-L-cysteinyl-[cysteine desulfurase] + AH2 = [ThiS sulfur-carrier protein]-C-terminal-Gly-aminoethanethioate + L-cysteinyl-[cysteine desulfurase] + A + AMP + 2 H(+). It functions in the pathway cofactor biosynthesis; thiamine diphosphate biosynthesis. Catalyzes the ATP-dependent transfer of a sulfur to tRNA to produce 4-thiouridine in position 8 of tRNAs, which functions as a near-UV photosensor. Also catalyzes the transfer of sulfur to the sulfur carrier protein ThiS, forming ThiS-thiocarboxylate. This is a step in the synthesis of thiazole, in the thiamine biosynthesis pathway. The sulfur is donated as persulfide by IscS. In Psychromonas ingrahamii (strain DSM 17664 / CCUG 51855 / 37), this protein is tRNA sulfurtransferase.